Consider the following 227-residue polypeptide: PKHD-type hydroxylase Dtpsy_0528 (227 aa).

Residues 78 to 178 (TIYPPKFNRY…RVASFFWIES (101 aa)) form the Fe2OG dioxygenase domain. Residues His-96, Asp-98, and His-159 each coordinate Fe cation. Residue Arg-169 coordinates 2-oxoglutarate.

Requires Fe(2+) as cofactor. The cofactor is L-ascorbate.

The protein is PKHD-type hydroxylase Dtpsy_0528 of Acidovorax ebreus (strain TPSY) (Diaphorobacter sp. (strain TPSY)).